Here is an 863-residue protein sequence, read N- to C-terminus: DNA mismatch repair protein MutS 2 (863 aa).

An ATP-binding site is contributed by 626–633; the sequence is GPNMSGKS.

The protein belongs to the DNA mismatch repair MutS family.

This protein is involved in the repair of mismatches in DNA. It is possible that it carries out the mismatch recognition step. This protein has a weak ATPase activity. This chain is DNA mismatch repair protein MutS 2 (mutS2), found in Halobacterium salinarum (strain ATCC 700922 / JCM 11081 / NRC-1) (Halobacterium halobium).